The primary structure comprises 352 residues: Phenylalanine--tRNA ligase alpha subunit (352 aa).

Glu-258 serves as a coordination point for Mg(2+).

It belongs to the class-II aminoacyl-tRNA synthetase family. Phe-tRNA synthetase alpha subunit type 1 subfamily. In terms of assembly, tetramer of two alpha and two beta subunits. Mg(2+) is required as a cofactor.

It localises to the cytoplasm. The catalysed reaction is tRNA(Phe) + L-phenylalanine + ATP = L-phenylalanyl-tRNA(Phe) + AMP + diphosphate + H(+). The sequence is that of Phenylalanine--tRNA ligase alpha subunit from Staphylococcus carnosus (strain TM300).